We begin with the raw amino-acid sequence, 453 residues long: Trigger factor (453 aa).

The PPIase FKBP-type domain occupies 171–256 (GDRVTVSFKG…ATKVEAPQDV (86 aa)).

This sequence belongs to the FKBP-type PPIase family. Tig subfamily.

The protein resides in the cytoplasm. It carries out the reaction [protein]-peptidylproline (omega=180) = [protein]-peptidylproline (omega=0). Involved in protein export. Acts as a chaperone by maintaining the newly synthesized protein in an open conformation. Functions as a peptidyl-prolyl cis-trans isomerase. The chain is Trigger factor from Rhodopseudomonas palustris (strain BisB5).